Here is a 206-residue protein sequence, read N- to C-terminus: Dephospho-CoA kinase (206 aa).

The DPCK domain occupies 4-200; it reads TVALTGGIGS…ASYLKLASQF (197 aa). 12 to 17 is an ATP binding site; the sequence is GSGKST.

The protein belongs to the CoaE family.

Its subcellular location is the cytoplasm. It catalyses the reaction 3'-dephospho-CoA + ATP = ADP + CoA + H(+). The protein operates within cofactor biosynthesis; coenzyme A biosynthesis; CoA from (R)-pantothenate: step 5/5. Catalyzes the phosphorylation of the 3'-hydroxyl group of dephosphocoenzyme A to form coenzyme A. In Salmonella choleraesuis (strain SC-B67), this protein is Dephospho-CoA kinase.